The primary structure comprises 349 residues: Isopentenyl-diphosphate delta-isomerase (349 aa).

Residue 9 to 10 participates in substrate binding; sequence RK. Residues 65–67, Ser-95, and Asn-124 contribute to the FMN site; that span reads AMT. 95–97 is a binding site for substrate; the sequence is STH. Substrate is bound at residue Gln-154. Mg(2+) is bound at residue Glu-155. FMN contacts are provided by residues Lys-186, Ser-211, Thr-216, 262 to 264, and 283 to 284; these read GLR and SR.

This sequence belongs to the IPP isomerase type 2 family. Homooctamer. Dimer of tetramers. Requires FMN as cofactor. NADPH is required as a cofactor. It depends on Mg(2+) as a cofactor.

It localises to the cytoplasm. It carries out the reaction isopentenyl diphosphate = dimethylallyl diphosphate. Its function is as follows. Involved in the biosynthesis of isoprenoids. Catalyzes the 1,3-allylic rearrangement of the homoallylic substrate isopentenyl (IPP) to its allylic isomer, dimethylallyl diphosphate (DMAPP). The chain is Isopentenyl-diphosphate delta-isomerase from Staphylococcus aureus (strain USA300 / TCH1516).